The sequence spans 80 residues: RNA-binding protein KhpA (80 aa).

The KH domain maps to 33–80; the sequence is LEILQLRVASEDVGKVIGKHGRIARALRTLLSASAHASQTRYALEIID.

The protein belongs to the KhpA RNA-binding protein family. In terms of assembly, forms a complex with KhpB.

It is found in the cytoplasm. Its function is as follows. A probable RNA chaperone. Forms a complex with KhpB which binds to cellular RNA and controls its expression. Plays a role in peptidoglycan (PG) homeostasis and cell length regulation. In Treponema pallidum (strain Nichols), this protein is RNA-binding protein KhpA.